We begin with the raw amino-acid sequence, 1662 residues long: Putative mediator of RNA polymerase II transcription subunit 23 (1662 aa).

Disordered regions lie at residues 1 to 24, 95 to 139, 206 to 252, and 1530 to 1572; these read MYTN…PQQQ, QQRP…QSQP, TTTP…STTN, and GYDD…QDTN. The stretch at 39–122 forms a coiled coil; the sequence is QQQNIQQQQQ…QQSQQQQASL (84 aa). Over residues 95–124 the composition is skewed to low complexity; the sequence is QQRPQTPQQNAQQQSQQSQQSQQQQASLGQ. Positions 1532-1560 are enriched in acidic residues; that stretch reads DDDDDDEDDDYYDEDDEDEDDDNEDDQQD.

This sequence belongs to the Mediator complex subunit 23 family. Component of the Mediator complex.

The protein resides in the nucleus. Component of the Mediator complex, a coactivator involved in the regulated transcription of nearly all RNA polymerase II-dependent genes. Mediator functions as a bridge to convey information from gene-specific regulatory proteins to the basal RNA polymerase II transcription machinery. Mediator is recruited to promoters by direct interactions with regulatory proteins and serves as a scaffold for the assembly of a functional preinitiation complex with RNA polymerase II and the general transcription factors. The protein is Putative mediator of RNA polymerase II transcription subunit 23 (med23) of Dictyostelium discoideum (Social amoeba).